The following is a 626-amino-acid chain: Miltiradiene synthase KSL1, chloroplastic (626 aa).

A chloroplast-targeting transit peptide spans 1–51 (MSLAFNLRVIPFSGHTIQSRRGLFPVHESPMITTKPFAAVKCSLTTSTDLM). The Mg(2+) site is built by D329, D333, N473, and E481. A DDXXD motif motif is present at residues 329 to 333 (DDFFD).

This sequence belongs to the terpene synthase family. It depends on Mg(2+) as a cofactor. Highly expressed in roots, and, at low levels, in stems and leaves.

It localises to the plastid. The protein localises to the chloroplast. It carries out the reaction (+)-copalyl diphosphate = miltiradiene + diphosphate. Its pathway is secondary metabolite biosynthesis; terpenoid biosynthesis. Its function is as follows. Involved in the biosynthesis of ent-kaurene diterpenoids natural products such as oridonin, miltiradiene, eriocalyxin B and nezukol, known to exhibit antitumor, anti-inflammatory and antibacterial activities. Catalyzes the conversion of (+)-copalyl diphosphate ((+)-CPP) to miltiradiene. This Isodon rubescens (Rabdosia rubescens) protein is Miltiradiene synthase KSL1, chloroplastic.